The primary structure comprises 188 residues: Translocon-associated protein subunit beta (188 aa).

The first 15 residues, 1-15, serve as a signal peptide directing secretion; sequence MKFSLFALLFVVVSC. Residues 16–151 are Lumenal-facing; it reads VDVGTQTRDA…EYDRRFAPKY (136 aa). N-linked (GlcNAc...) asparagine glycans are attached at residues N93 and N109. A helical transmembrane segment spans residues 152-172; that stretch reads TYFLVFFLIVAPTTLGSFLLF. Residues 173–188 are Cytoplasmic-facing; sequence QQSKARFPNVIKKKST.

Belongs to the TRAP-beta family. Heterotetramer of TRAP-alpha, TRAP-beta, TRAP-delta and TRAP-gamma.

It is found in the endoplasmic reticulum membrane. Its function is as follows. TRAP proteins are part of a complex whose function is to bind calcium to the ER membrane and thereby regulate the retention of ER resident proteins. This is Translocon-associated protein subunit beta from Caenorhabditis elegans.